The following is a 31-amino-acid chain: Photosystem I reaction center subunit XII (31 aa).

Residues 6 to 25 form a helical membrane-spanning segment; that stretch reads TQILAALVVALLPAFLAFRL.

Belongs to the PsaM family.

It localises to the cellular thylakoid membrane. The sequence is that of Photosystem I reaction center subunit XII from Synechocystis sp. (strain ATCC 27184 / PCC 6803 / Kazusa).